Consider the following 123-residue polypeptide: NADH-quinone oxidoreductase subunit A (123 aa).

3 consecutive transmembrane segments (helical) span residues 11 to 31, 68 to 88, and 93 to 113; these read YLPI…IMIL, LVAI…PWAI, and IGKI…IGFI.

The protein belongs to the complex I subunit 3 family. NDH-1 is composed of 14 different subunits. Subunits NuoA, H, J, K, L, M, N constitute the membrane sector of the complex.

It is found in the cell inner membrane. It catalyses the reaction a quinone + NADH + 5 H(+)(in) = a quinol + NAD(+) + 4 H(+)(out). Its function is as follows. NDH-1 shuttles electrons from NADH, via FMN and iron-sulfur (Fe-S) centers, to quinones in the respiratory chain. The immediate electron acceptor for the enzyme in this species is believed to be ubiquinone. Couples the redox reaction to proton translocation (for every two electrons transferred, four hydrogen ions are translocated across the cytoplasmic membrane), and thus conserves the redox energy in a proton gradient. This is NADH-quinone oxidoreductase subunit A from Rickettsia felis (strain ATCC VR-1525 / URRWXCal2) (Rickettsia azadi).